Reading from the N-terminus, the 67-residue chain is DNA-directed RNA polymerase subunit omega (67 aa).

This sequence belongs to the RNA polymerase subunit omega family. As to quaternary structure, the RNAP catalytic core consists of 2 alpha, 1 beta, 1 beta' and 1 omega subunit. When a sigma factor is associated with the core the holoenzyme is formed, which can initiate transcription.

The enzyme catalyses RNA(n) + a ribonucleoside 5'-triphosphate = RNA(n+1) + diphosphate. Its function is as follows. Promotes RNA polymerase assembly. Latches the N- and C-terminal regions of the beta' subunit thereby facilitating its interaction with the beta and alpha subunits. The sequence is that of DNA-directed RNA polymerase subunit omega from Leptothrix cholodnii (strain ATCC 51168 / LMG 8142 / SP-6) (Leptothrix discophora (strain SP-6)).